A 324-amino-acid chain; its full sequence is Glyoxylate/hydroxypyruvate reductase B (324 aa).

Active-site residues include Arg-237 and Glu-266. His-285 (proton donor) is an active-site residue.

It belongs to the D-isomer specific 2-hydroxyacid dehydrogenase family. GhrB subfamily. As to quaternary structure, homodimer.

It is found in the cytoplasm. The enzyme catalyses glycolate + NADP(+) = glyoxylate + NADPH + H(+). It catalyses the reaction (R)-glycerate + NAD(+) = 3-hydroxypyruvate + NADH + H(+). The catalysed reaction is (R)-glycerate + NADP(+) = 3-hydroxypyruvate + NADPH + H(+). Its function is as follows. Catalyzes the NADPH-dependent reduction of glyoxylate and hydroxypyruvate into glycolate and glycerate, respectively. This chain is Glyoxylate/hydroxypyruvate reductase B, found in Shigella boydii serotype 4 (strain Sb227).